The chain runs to 283 residues: ATP phosphoribosyltransferase (283 aa).

The protein belongs to the ATP phosphoribosyltransferase family. Long subfamily. It depends on Mg(2+) as a cofactor.

The protein localises to the cytoplasm. It catalyses the reaction 1-(5-phospho-beta-D-ribosyl)-ATP + diphosphate = 5-phospho-alpha-D-ribose 1-diphosphate + ATP. It functions in the pathway amino-acid biosynthesis; L-histidine biosynthesis; L-histidine from 5-phospho-alpha-D-ribose 1-diphosphate: step 1/9. Its activity is regulated as follows. Feedback inhibited by histidine. In terms of biological role, catalyzes the condensation of ATP and 5-phosphoribose 1-diphosphate to form N'-(5'-phosphoribosyl)-ATP (PR-ATP). Has a crucial role in the pathway because the rate of histidine biosynthesis seems to be controlled primarily by regulation of HisG enzymatic activity. The protein is ATP phosphoribosyltransferase of Parabacteroides distasonis (strain ATCC 8503 / DSM 20701 / CIP 104284 / JCM 5825 / NCTC 11152).